We begin with the raw amino-acid sequence, 141 residues long: Nucleoside triphosphatase NudI (141 aa).

The Nudix hydrolase domain maps to 1–141 (MRQRTIVCPL…RKTLRLKGLL (141 aa)). The Nudix box motif lies at 38–59 (GGVEPGERIEEALRREIREELG).

This sequence belongs to the Nudix hydrolase family. NudI subfamily. In terms of assembly, monomer. Mg(2+) is required as a cofactor.

It carries out the reaction a ribonucleoside 5'-triphosphate + H2O = a ribonucleoside 5'-phosphate + diphosphate + H(+). The enzyme catalyses a 2'-deoxyribonucleoside 5'-triphosphate + H2O = a 2'-deoxyribonucleoside 5'-phosphate + diphosphate + H(+). It catalyses the reaction dUTP + H2O = dUMP + diphosphate + H(+). The catalysed reaction is dTTP + H2O = dTMP + diphosphate + H(+). It carries out the reaction dCTP + H2O = dCMP + diphosphate + H(+). Functionally, catalyzes the hydrolysis of nucleoside triphosphates, with a preference for pyrimidine deoxynucleoside triphosphates (dUTP, dTTP and dCTP). The chain is Nucleoside triphosphatase NudI from Escherichia coli O6:K15:H31 (strain 536 / UPEC).